A 173-amino-acid chain; its full sequence is Aliphatic sulfonate oxidoreductase, polyferredoxin-like subunit (173 aa).

3 4Fe-4S ferredoxin-type domains span residues 9 to 40, 48 to 80, and 82 to 111; these read IWIL…WPEA, LFPG…VDEK, and GAVV…IPAG. [4Fe-4S] cluster-binding residues include Cys-18, Cys-21, Cys-24, Cys-28, Cys-58, Cys-61, Cys-66, Cys-70, Cys-91, Cys-94, Cys-97, Cys-101, Cys-118, Cys-121, Cys-127, and Cys-131.

As to quaternary structure, heterodimer composed of a small WOR5-S subunit, with four [4Fe-4S] clusters, and a large WOR5-L subunit, containing the active site tungsto-bispyranopterin cofactor as well as another [4Fe-4S] cluster. The cofactor is [4Fe-4S] cluster.

It is found in the cytoplasm. Its function is as follows. Polyferredoxin-like subunit of an oxidoreductase that can desulfonate and oxidize aliphatic sulfonates such as taurine. May serve as a an electron-transfer subunit between the catalytic subunit and ferredoxin. This chain is Aliphatic sulfonate oxidoreductase, polyferredoxin-like subunit, found in Pyrococcus furiosus (strain ATCC 43587 / DSM 3638 / JCM 8422 / Vc1).